The primary structure comprises 409 residues: Arginine biosynthesis bifunctional protein ArgJ (409 aa).

6 residues coordinate substrate: T156, K182, T193, E280, N404, and S409. T193 functions as the Nucleophile in the catalytic mechanism.

This sequence belongs to the ArgJ family. Heterotetramer of two alpha and two beta chains.

It localises to the cytoplasm. It carries out the reaction N(2)-acetyl-L-ornithine + L-glutamate = N-acetyl-L-glutamate + L-ornithine. The catalysed reaction is L-glutamate + acetyl-CoA = N-acetyl-L-glutamate + CoA + H(+). The protein operates within amino-acid biosynthesis; L-arginine biosynthesis; L-ornithine and N-acetyl-L-glutamate from L-glutamate and N(2)-acetyl-L-ornithine (cyclic): step 1/1. It functions in the pathway amino-acid biosynthesis; L-arginine biosynthesis; N(2)-acetyl-L-ornithine from L-glutamate: step 1/4. In terms of biological role, catalyzes two activities which are involved in the cyclic version of arginine biosynthesis: the synthesis of N-acetylglutamate from glutamate and acetyl-CoA as the acetyl donor, and of ornithine by transacetylation between N(2)-acetylornithine and glutamate. The sequence is that of Arginine biosynthesis bifunctional protein ArgJ from Ralstonia nicotianae (strain ATCC BAA-1114 / GMI1000) (Ralstonia solanacearum).